Consider the following 1913-residue polypeptide: Protein TIC 214 (1913 aa).

A run of 5 helical transmembrane segments spans residues isoleucine 18 to glycine 38, phenylalanine 64 to leucine 84, leucine 124 to leucine 144, valine 172 to isoleucine 192, and leucine 214 to leucine 234. Disordered stretches follow at residues lysine 245–glutamate 330, tyrosine 707–threonine 734, and glutamate 1605–lysine 1652. A compositionally biased stretch (basic and acidic residues) spans lysine 260–glutamine 289. Positions glutamate 303–glutamate 314 are enriched in acidic residues. Over residues glutamate 315–glutamate 330 the composition is skewed to basic and acidic residues. The segment covering proline 718 to asparagine 729 has biased composition (low complexity).

Belongs to the TIC214 family. Part of the Tic complex.

It localises to the plastid. The protein localises to the chloroplast inner membrane. Involved in protein precursor import into chloroplasts. May be part of an intermediate translocation complex acting as a protein-conducting channel at the inner envelope. In Acorus calamus var. americanus (American sweet flag), this protein is Protein TIC 214.